We begin with the raw amino-acid sequence, 418 residues long: Light-independent protochlorophyllide reductase subunit N (418 aa).

Cysteine 17, cysteine 42, and cysteine 103 together coordinate [4Fe-4S] cluster.

Belongs to the BchN/ChlN family. In terms of assembly, protochlorophyllide reductase is composed of three subunits; ChlL, ChlN and ChlB. Forms a heterotetramer of two ChlB and two ChlN subunits. The cofactor is [4Fe-4S] cluster.

The enzyme catalyses chlorophyllide a + oxidized 2[4Fe-4S]-[ferredoxin] + 2 ADP + 2 phosphate = protochlorophyllide a + reduced 2[4Fe-4S]-[ferredoxin] + 2 ATP + 2 H2O. It participates in porphyrin-containing compound metabolism; chlorophyll biosynthesis (light-independent). In terms of biological role, component of the dark-operative protochlorophyllide reductase (DPOR) that uses Mg-ATP and reduced ferredoxin to reduce ring D of protochlorophyllide (Pchlide) to form chlorophyllide a (Chlide). This reaction is light-independent. The NB-protein (ChlN-ChlB) is the catalytic component of the complex. The protein is Light-independent protochlorophyllide reductase subunit N of Prochlorococcus marinus subsp. pastoris (strain CCMP1986 / NIES-2087 / MED4).